The following is a 155-amino-acid chain: Ribosomal RNA large subunit methyltransferase H (155 aa).

Residues Leu73, Gly104, and 123-128 each bind S-adenosyl-L-methionine; that span reads LSPLTL.

The protein belongs to the RNA methyltransferase RlmH family. As to quaternary structure, homodimer.

The protein localises to the cytoplasm. It carries out the reaction pseudouridine(1915) in 23S rRNA + S-adenosyl-L-methionine = N(3)-methylpseudouridine(1915) in 23S rRNA + S-adenosyl-L-homocysteine + H(+). Specifically methylates the pseudouridine at position 1915 (m3Psi1915) in 23S rRNA. This Pseudomonas aeruginosa (strain UCBPP-PA14) protein is Ribosomal RNA large subunit methyltransferase H.